Reading from the N-terminus, the 268-residue chain is Peptide transport system ATP-binding protein SapF (268 aa).

In terms of domain architecture, ABC transporter spans 6–251 (LEVRNLSKTF…PLHELTRRLI (246 aa)). Residue 47–54 (GENGSGKS) coordinates ATP.

This sequence belongs to the ABC transporter superfamily.

It localises to the cell inner membrane. Its function is as follows. Involved in a peptide intake transport system that plays a role in the resistance to antimicrobial peptides. The polypeptide is Peptide transport system ATP-binding protein SapF (Salmonella typhimurium (strain LT2 / SGSC1412 / ATCC 700720)).